Consider the following 201-residue polypeptide: Guanylyl cyclase-activating protein 1 (201 aa).

Residue Gly2 is the site of N-myristoyl glycine attachment. Residue Asn3 is modified to Deamidated asparagine. EF-hand domains lie at 31-49 (SGQL…KNLS), 51-86 (SASQ…VLKG), 87-122 (KVEQ…IRAI), and 131-166 (TAEE…DQML). Ca(2+) contacts are provided by Asp64, Asn66, Asp68, Tyr70, Glu75, Asp100, Asp102, Asn104, Cys106, Glu111, Asp144, Asn146, Asp148, Glu150, and Glu155.

In terms of assembly, homodimer. As to expression, in the retina, it is expressed in rod and cone photoreceptors.

The protein resides in the membrane. The protein localises to the photoreceptor inner segment. It localises to the cell projection. It is found in the cilium. Its subcellular location is the photoreceptor outer segment. Its function is as follows. Stimulates retinal guanylyl cyclase when free calcium ions concentration is low and inhibits guanylyl cyclase when free calcium ions concentration is elevated. This Ca(2+)-sensitive regulation of retinal guanylyl cyclase is a key event in recovery of the dark state of rod photoreceptors following light exposure. May be involved in cone photoreceptor light response and recovery of response in bright light. The chain is Guanylyl cyclase-activating protein 1 (GUCA1A) from Homo sapiens (Human).